Reading from the N-terminus, the 144-residue chain is 3-hydroxyacyl-[acyl-carrier-protein] dehydratase FabZ (144 aa).

Residue H48 is part of the active site.

Belongs to the thioester dehydratase family. FabZ subfamily.

It localises to the cytoplasm. The catalysed reaction is a (3R)-hydroxyacyl-[ACP] = a (2E)-enoyl-[ACP] + H2O. Functionally, involved in unsaturated fatty acids biosynthesis. Catalyzes the dehydration of short chain beta-hydroxyacyl-ACPs and long chain saturated and unsaturated beta-hydroxyacyl-ACPs. This chain is 3-hydroxyacyl-[acyl-carrier-protein] dehydratase FabZ, found in Listeria welshimeri serovar 6b (strain ATCC 35897 / DSM 20650 / CCUG 15529 / CIP 8149 / NCTC 11857 / SLCC 5334 / V8).